Reading from the N-terminus, the 349-residue chain is DNA polymerase IV (349 aa).

Positions 4-185 (IIHIDCDCFY…LPVAKLHGVG (182 aa)) constitute a UmuC domain. Mg(2+) contacts are provided by Asp8 and Asp103. The active site involves Glu104.

Belongs to the DNA polymerase type-Y family. In terms of assembly, monomer. Mg(2+) is required as a cofactor.

It is found in the cytoplasm. The catalysed reaction is DNA(n) + a 2'-deoxyribonucleoside 5'-triphosphate = DNA(n+1) + diphosphate. Its function is as follows. Poorly processive, error-prone DNA polymerase involved in untargeted mutagenesis. Copies undamaged DNA at stalled replication forks, which arise in vivo from mismatched or misaligned primer ends. These misaligned primers can be extended by PolIV. Exhibits no 3'-5' exonuclease (proofreading) activity. May be involved in translesional synthesis, in conjunction with the beta clamp from PolIII. This is DNA polymerase IV from Pseudomonas paraeruginosa (strain DSM 24068 / PA7) (Pseudomonas aeruginosa (strain PA7)).